Consider the following 536-residue polypeptide: Nucleolar protein 58 (536 aa).

Thr-34 is subject to Phosphothreonine. Residue Ser-109 is modified to Phosphoserine. A Glycyl lysine isopeptide (Lys-Gly) (interchain with G-Cter in SUMO2) cross-link involves residue Lys-157. The Nop domain occupies 282–400 (IAPNVTVMVG…LEARLRILED (119 aa)). Phosphoserine is present on residues Ser-304 and Ser-351. Glycyl lysine isopeptide (Lys-Gly) (interchain with G-Cter in SUMO2) cross-links involve residues Lys-353, Lys-411, Lys-415, Lys-422, Lys-426, Lys-441, Lys-444, and Lys-465. Residues 414 to 427 (AKAEKYEHKSEVKT) show a composition bias toward basic and acidic residues. The segment at 414-440 (AKAEKYEHKSEVKTYDPSGDSTLPTCS) is disordered. Lys-467 participates in a covalent cross-link: Glycyl lysine isopeptide (Lys-Gly) (interchain with G-Cter in SUMO); alternate. Residue Lys-467 forms a Glycyl lysine isopeptide (Lys-Gly) (interchain with G-Cter in SUMO1); alternate linkage. Lys-467 participates in a covalent cross-link: Glycyl lysine isopeptide (Lys-Gly) (interchain with G-Cter in SUMO2); alternate. The span at 470–488 (VEEEMEEEEAEEEQVVEEE) shows a compositional bias: acidic residues. A disordered region spans residues 470 to 536 (VEEEMEEEEA…KKKKKKDAED (67 aa)). Lys-492 is covalently cross-linked (Glycyl lysine isopeptide (Lys-Gly) (interchain with G-Cter in SUMO2)). Residues 492–502 (KKKKKKDKKKH) show a composition bias toward basic residues. A Glycyl lysine isopeptide (Lys-Gly) (interchain with G-Cter in SUMO); alternate cross-link involves residue Lys-504. A Glycyl lysine isopeptide (Lys-Gly) (interchain with G-Cter in SUMO2); alternate cross-link involves residue Lys-504. Phosphoserine is present on residues Ser-509 and Ser-521. Residues 524 to 536 (KKKKKKKKKDAED) are compositionally biased toward basic residues.

The protein belongs to the NOP5/NOP56 family. In terms of assembly, core component of box C/D small nucleolar ribonucleoprotein (snoRNP) particles; the core proteins SNU13, NOP56, NOP58 and FBL or FBLL1 assemble stepwise onto the snoRNA. Interacts with NOLC1/Nopp140. Interacts with NOPCHAP1, NUFIP1, RUVBL1 and RUVBL2; NOPCHAP1 bridges the association of NOP58 with RUVBL1:RUVBL2 and NUFIP1. Interacts with PIH1D1. Part of the small subunit (SSU) processome, composed of more than 70 proteins and the RNA chaperone small nucleolar RNA (snoRNA) U3. Post-translationally, sumoylation is essential for high-affinity binding to snoRNAs.

Its subcellular location is the nucleus. The protein resides in the nucleolus. It is found in the nucleoplasm. In terms of biological role, required for the biogenesis of box C/D snoRNAs such as U3, U8 and U14 snoRNAs. Part of the small subunit (SSU) processome, first precursor of the small eukaryotic ribosomal subunit. During the assembly of the SSU processome in the nucleolus, many ribosome biogenesis factors, an RNA chaperone and ribosomal proteins associate with the nascent pre-rRNA and work in concert to generate RNA folding, modifications, rearrangements and cleavage as well as targeted degradation of pre-ribosomal RNA by the RNA exosome. Core component of box C/D small nucleolar ribonucleoprotein (snoRNP) complexes that function in methylation of multiple sites on ribosomal RNAs (rRNAs) and messenger RNAs (mRNAs). The chain is Nucleolar protein 58 (Nop58) from Mus musculus (Mouse).